Here is a 349-residue protein sequence, read N- to C-terminus: Xylitol-binding protein (349 aa).

An N-terminal signal peptide occupies residues 1-22; the sequence is MNITSKIGAIAAAGAVGLGLTA. A lipid anchor (N-palmitoyl cysteine) is attached at Cys-23. Cys-23 carries the S-diacylglycerol cysteine lipid modification. Xylitol-binding residues include Tyr-42, Asn-121, Arg-173, Asn-224, Asp-249, and Gln-269.

It belongs to the bacterial solute-binding protein 2 family.

The protein resides in the cell membrane. In terms of biological role, part of an ABC transporter complex likely involved in xylitol import. Binds xylitol. This chain is Xylitol-binding protein, found in Mycolicibacterium smegmatis (strain ATCC 700084 / mc(2)155) (Mycobacterium smegmatis).